The following is a 176-amino-acid chain: Ubiquinol-cytochrome c reductase iron-sulfur subunit (176 aa).

The chain crosses the membrane as a helical span at residues F15–I36. In terms of domain architecture, Rieske spans A87–Q174. Positions 119, 121, 138, and 141 each coordinate [2Fe-2S] cluster. C124 and C140 are oxidised to a cystine.

It belongs to the Rieske iron-sulfur protein family. In terms of assembly, the main subunits of complex b-c1 are: cytochrome b, cytochrome c1 and the Rieske protein. [2Fe-2S] cluster is required as a cofactor.

It localises to the cell membrane. The catalysed reaction is a quinol + 2 Fe(III)-[cytochrome c](out) = a quinone + 2 Fe(II)-[cytochrome c](out) + 2 H(+)(out). Component of the ubiquinol-cytochrome c reductase complex (complex III or cytochrome b-c1 complex), which is a respiratory chain that generates an electrochemical potential coupled to ATP synthesis. In Bradyrhizobium diazoefficiens (strain JCM 10833 / BCRC 13528 / IAM 13628 / NBRC 14792 / USDA 110), this protein is Ubiquinol-cytochrome c reductase iron-sulfur subunit (petA).